The following is a 443-amino-acid chain: MGSKLYIRTFGCQMNEYDSAKMADILLSEKGMELAETPEEADLILFNTCSVREKAQEKVFHDLGRVRHLKNSKPDLLIGVGGCVASQEGPEIVKRAPFVDLVFGPQTLHRLPDLIDARRRTGRPQVDISFPEIEKFDRLPPARTEGSTAFVSIMEGCSKYCSFCVVPYTRGEEVSRPLDDVLTEVAGLAIQGVKEVTLLGQNVNAYLGKMINGEIADFATLLDYIHEIPGIERIRYTTSHPREFTARLIEAYQRLPKLVGHVHLPVQSGSDRILAAMKRGYTTVEYKSIVRKLRLVRPDISISSDFIIGFPGETEDDFEATMKLIDDVHFDESFSFIYSPRPGTPAADLPDNTSHQIKLTRLYRLQEKIQLNAQAISQGMVDTVQRILVEGPSRKDPGEFCGRTDNNRVVNFAGHAGLTGSFIDIRITAVSSHTLRGEISDMQ.

The region spanning 3–120 (SKLYIRTFGC…LPDLIDARRR (118 aa)) is the MTTase N-terminal domain. 6 residues coordinate [4Fe-4S] cluster: Cys-12, Cys-49, Cys-83, Cys-157, Cys-161, and Cys-164. Residues 143–375 (RTEGSTAFVS…QEKIQLNAQA (233 aa)) form the Radical SAM core domain. The region spanning 378–441 (QGMVDTVQRI…SHTLRGEISD (64 aa)) is the TRAM domain.

It belongs to the methylthiotransferase family. MiaB subfamily. As to quaternary structure, monomer. [4Fe-4S] cluster is required as a cofactor.

The protein localises to the cytoplasm. The catalysed reaction is N(6)-dimethylallyladenosine(37) in tRNA + (sulfur carrier)-SH + AH2 + 2 S-adenosyl-L-methionine = 2-methylsulfanyl-N(6)-dimethylallyladenosine(37) in tRNA + (sulfur carrier)-H + 5'-deoxyadenosine + L-methionine + A + S-adenosyl-L-homocysteine + 2 H(+). Catalyzes the methylthiolation of N6-(dimethylallyl)adenosine (i(6)A), leading to the formation of 2-methylthio-N6-(dimethylallyl)adenosine (ms(2)i(6)A) at position 37 in tRNAs that read codons beginning with uridine. This chain is tRNA-2-methylthio-N(6)-dimethylallyladenosine synthase, found in Nitrosomonas europaea (strain ATCC 19718 / CIP 103999 / KCTC 2705 / NBRC 14298).